Reading from the N-terminus, the 163-residue chain is Photosystem II extrinsic protein V (163 aa).

The N-terminal stretch at 1–26 is a signal peptide; it reads MFKTYSKSFACILFCIFNIFVVSASA. The heme c site is built by Cys63, Cys66, His67, and Met130.

This sequence belongs to the cytochrome c family. PsbV subfamily. PSII is composed of 1 copy each of membrane proteins PsbA, PsbB, PsbC, PsbD, PsbE, PsbF, PsbH, PsbI, PsbJ, PsbK, PsbL, PsbM, PsbT, PsbY, PsbZ, Psb30/Ycf12, at least 3 peripheral proteins of the oxygen-evolving complex and a large number of cofactors. It forms dimeric complexes. Heme c serves as cofactor.

It localises to the plastid. The protein resides in the chloroplast thylakoid membrane. Functionally, one of the extrinsic, lumenal subunits of photosystem II (PSII). PSII is a light-driven water plastoquinone oxidoreductase, using light energy to abstract electrons from H(2)O, generating a proton gradient subsequently used for ATP formation. The extrinsic proteins stabilize the structure of photosystem II oxygen-evolving complex (OEC), the ion environment of oxygen evolution and protect the OEC against heat-induced inactivation. The chain is Photosystem II extrinsic protein V from Thalassiosira pseudonana (Marine diatom).